The following is a 218-amino-acid chain: Glycoprotein UL1 (218 aa).

An N-terminal signal peptide occupies residues 1–27 (MGVQCNSKLLLLAVLITIILSSILVQA). A helical membrane pass occupies residues 178–198 (VATHVGWTATVVIIICVLTYV).

Belongs to the RL11 family.

It is found in the virion membrane. This Homo sapiens (Human) protein is Glycoprotein UL1 (UL1).